Consider the following 470-residue polypeptide: Glutathione reductase (470 aa).

FAD is bound by residues S16 and G17. S16 is a binding site for glutathione. R23 serves as a coordination point for glutathione. Residues E36, T43, C44, and K52 each coordinate FAD. A disulfide bridge links C44 with C49. Y104 is a binding site for glutathione. A120 contacts FAD. NADP(+) is bound by residues G190, I193, E196, R213, and R219. T228 lines the glutathione pocket. Residue G280 coordinates NADP(+). D321 provides a ligand contact to FAD. E327 contributes to the NADP(+) binding site. T329 lines the FAD pocket. Position 337 (R337) interacts with glutathione. Residue A362 coordinates NADP(+). K412 contributes to the glutathione binding site. H459 contributes to the FAD binding site. The active-site Proton acceptor is the H459.

Belongs to the class-I pyridine nucleotide-disulfide oxidoreductase family. As to quaternary structure, homodimer. It depends on FAD as a cofactor.

It localises to the cytoplasm. It is found in the mitochondrion. The catalysed reaction is 2 glutathione + NADP(+) = glutathione disulfide + NADPH + H(+). Its function is as follows. Catalyzes the reduction of glutathione disulfide (GSSG) to reduced glutathione (GSH). Constitutes the major mechanism to maintain a high GSH:GSSG ratio in the cytosol. The protein is Glutathione reductase (GLR1) of Yarrowia lipolytica (strain CLIB 122 / E 150) (Yeast).